Here is a 42-residue protein sequence, read N- to C-terminus: Photosystem II reaction center protein J (42 aa).

Residues 10-30 (IPLWLVGTVVGLLAIGLLALF) traverse the membrane as a helical segment.

Belongs to the PsbJ family. PSII is composed of 1 copy each of membrane proteins PsbA, PsbB, PsbC, PsbD, PsbE, PsbF, PsbH, PsbI, PsbJ, PsbK, PsbL, PsbM, PsbT, PsbX, PsbY, PsbZ, Psb30/Ycf12, at least 3 peripheral proteins of the oxygen-evolving complex and a large number of cofactors. It forms dimeric complexes.

Its subcellular location is the plastid. The protein localises to the chloroplast thylakoid membrane. One of the components of the core complex of photosystem II (PSII). PSII is a light-driven water:plastoquinone oxidoreductase that uses light energy to abstract electrons from H(2)O, generating O(2) and a proton gradient subsequently used for ATP formation. It consists of a core antenna complex that captures photons, and an electron transfer chain that converts photonic excitation into a charge separation. The sequence is that of Photosystem II reaction center protein J from Mesostigma viride (Green alga).